A 405-amino-acid polypeptide reads, in one-letter code: D-threonate kinase (405 aa).

Residues D12, R59, and K88–S91 contribute to the substrate site. ATP-binding positions include S243, G337–G340, and G383.

It belongs to the four-carbon acid sugar kinase family.

The catalysed reaction is D-threonate + ATP = 4-O-phospho-D-threonate + ADP + H(+). Its function is as follows. Catalyzes the ATP-dependent phosphorylation of D-threonate to D-threonate 4-phosphate. Can also phosphorylate 4-hydroxy-L-threonine, with lower efficiency. The chain is D-threonate kinase from Bordetella bronchiseptica (strain ATCC BAA-588 / NCTC 13252 / RB50) (Alcaligenes bronchisepticus).